Consider the following 86-residue polypeptide: Putative regulatory protein BBR47_37350 (86 aa).

Belongs to the RemA family.

The sequence is that of Putative regulatory protein BBR47_37350 from Brevibacillus brevis (strain 47 / JCM 6285 / NBRC 100599).